We begin with the raw amino-acid sequence, 68 residues long: Protein transport protein Sec61 gamma-2 subunit (68 aa).

Residues 1 to 32 (MDKVVKFAEPGRAFAKDSIRLVKRCTKPDRKE) lie on the Cytoplasmic side of the membrane. Residues 33–61 (FQKIAIATAVGFCIMGFIGFFVKLIHIPI) traverse the membrane as a helical segment. At 62–68 (NNIIVGS) the chain is on the extracellular side.

The protein belongs to the SecE/SEC61-gamma family. In terms of assembly, heterotrimeric complex composed of SEC61-alpha, SEC61-beta and SEC61-gamma.

Its subcellular location is the endoplasmic reticulum membrane. Functionally, necessary for protein translocation in the endoplasmic reticulum. This Drosophila melanogaster (Fruit fly) protein is Protein transport protein Sec61 gamma-2 subunit (Sec61gamma).